The following is a 184-amino-acid chain: Ribose 1,5-bisphosphate phosphokinase PhnN (184 aa).

11 to 18 (GPSGAGKD) serves as a coordination point for ATP.

The protein belongs to the ribose 1,5-bisphosphokinase family.

It catalyses the reaction alpha-D-ribose 1,5-bisphosphate + ATP = 5-phospho-alpha-D-ribose 1-diphosphate + ADP. It participates in metabolic intermediate biosynthesis; 5-phospho-alpha-D-ribose 1-diphosphate biosynthesis; 5-phospho-alpha-D-ribose 1-diphosphate from D-ribose 5-phosphate (route II): step 3/3. Catalyzes the phosphorylation of ribose 1,5-bisphosphate to 5-phospho-D-ribosyl alpha-1-diphosphate (PRPP). The polypeptide is Ribose 1,5-bisphosphate phosphokinase PhnN (Burkholderia pseudomallei (strain K96243)).